We begin with the raw amino-acid sequence, 448 residues long: Adenylosuccinate synthetase (448 aa).

Residues 22 to 28 (GDEGKGK) and 50 to 52 (GHT) contribute to the GTP site. Asp-23 functions as the Proton acceptor in the catalytic mechanism. Positions 23 and 50 each coordinate Mg(2+). IMP contacts are provided by residues 23–26 (DEGK), 48–51 (NAGH), Thr-139, Arg-153, Gln-234, Thr-249, and Arg-321. His-51 acts as the Proton donor in catalysis. Position 317-323 (317-323 (SVTGRPR)) interacts with substrate. Residues Arg-323, 349-351 (KLD), and 431-433 (STG) each bind GTP.

The protein belongs to the adenylosuccinate synthetase family. In terms of assembly, homodimer. The cofactor is Mg(2+).

It localises to the cytoplasm. It carries out the reaction IMP + L-aspartate + GTP = N(6)-(1,2-dicarboxyethyl)-AMP + GDP + phosphate + 2 H(+). It functions in the pathway purine metabolism; AMP biosynthesis via de novo pathway; AMP from IMP: step 1/2. Its function is as follows. Plays an important role in the de novo pathway of purine nucleotide biosynthesis. Catalyzes the first committed step in the biosynthesis of AMP from IMP. This is Adenylosuccinate synthetase from Burkholderia mallei (strain NCTC 10247).